The primary structure comprises 155 residues: Ribosomal RNA large subunit methyltransferase H (155 aa).

Residues leucine 72, glycine 103, and 122 to 127 (LSDLTL) each bind S-adenosyl-L-methionine.

This sequence belongs to the RNA methyltransferase RlmH family. Homodimer.

It is found in the cytoplasm. The catalysed reaction is pseudouridine(1915) in 23S rRNA + S-adenosyl-L-methionine = N(3)-methylpseudouridine(1915) in 23S rRNA + S-adenosyl-L-homocysteine + H(+). Its function is as follows. Specifically methylates the pseudouridine at position 1915 (m3Psi1915) in 23S rRNA. The protein is Ribosomal RNA large subunit methyltransferase H of Acidovorax sp. (strain JS42).